A 1429-amino-acid polypeptide reads, in one-letter code: DNA-directed RNA polymerase subunit beta' (1429 aa).

Zn(2+) is bound by residues cysteine 68, cysteine 70, cysteine 83, and cysteine 86. Residues aspartate 459, aspartate 461, and aspartate 463 each coordinate Mg(2+). Zn(2+) contacts are provided by cysteine 805, cysteine 879, cysteine 886, and cysteine 889. Residues 1407-1429 (ESFPLLGGDGEPASTTSSTTEGE) form a disordered region. Positions 1419–1429 (ASTTSSTTEGE) are enriched in polar residues.

Belongs to the RNA polymerase beta' chain family. In terms of assembly, the RNAP catalytic core consists of 2 alpha, 1 beta, 1 beta' and 1 omega subunit. When a sigma factor is associated with the core the holoenzyme is formed, which can initiate transcription. Requires Mg(2+) as cofactor. Zn(2+) is required as a cofactor.

It catalyses the reaction RNA(n) + a ribonucleoside 5'-triphosphate = RNA(n+1) + diphosphate. Its function is as follows. DNA-dependent RNA polymerase catalyzes the transcription of DNA into RNA using the four ribonucleoside triphosphates as substrates. In Rhodopirellula baltica (strain DSM 10527 / NCIMB 13988 / SH1), this protein is DNA-directed RNA polymerase subunit beta'.